Consider the following 472-residue polypeptide: NADH-quinone oxidoreductase subunit N (472 aa).

Transmembrane regions (helical) follow at residues 5–25, 36–56, 77–97, 103–123, 126–146, 158–178, 197–217, 229–249, 264–284, 292–309, 319–339, 363–383, 396–416, and 441–461; these read LLTTEMLTALLGIGLLAIGLL, AYAAVFGLLGILVVTFFQYGI, IFLVAAILVILSAIDYVDGLP, FYALLVFATLGMMVMASANDL, LYVGMELMTITFFILVAYILG, LLLGGASSAVLLYGLSLLYGL, LAIAVVTIIAGFGFKISAVPF, PTPVTGFLAAASKAAGFAVLV, WLTVIAVLAGVTMVIGNVVAI, MLAYSSVAQAGYLLVGLM, ILFYAMLYVVANMGAFAVATA, ASVMTISLLSLAGIPPLAGFV, GVLWPAFLGFVMSMVSVYYYL, and LTVIFSMVVTVILGIYPGPLA.

This sequence belongs to the complex I subunit 2 family. NDH-1 is composed of 14 different subunits. Subunits NuoA, H, J, K, L, M, N constitute the membrane sector of the complex.

It localises to the cell membrane. The enzyme catalyses a quinone + NADH + 5 H(+)(in) = a quinol + NAD(+) + 4 H(+)(out). Functionally, NDH-1 shuttles electrons from NADH, via FMN and iron-sulfur (Fe-S) centers, to quinones in the respiratory chain. The immediate electron acceptor for the enzyme in this species is believed to be a menaquinone. Couples the redox reaction to proton translocation (for every two electrons transferred, four hydrogen ions are translocated across the cytoplasmic membrane), and thus conserves the redox energy in a proton gradient. In Heliobacterium modesticaldum (strain ATCC 51547 / Ice1), this protein is NADH-quinone oxidoreductase subunit N.